Here is a 684-residue protein sequence, read N- to C-terminus: Glycine--tRNA ligase beta subunit (684 aa).

Belongs to the class-II aminoacyl-tRNA synthetase family. As to quaternary structure, tetramer of two alpha and two beta subunits.

Its subcellular location is the cytoplasm. It catalyses the reaction tRNA(Gly) + glycine + ATP = glycyl-tRNA(Gly) + AMP + diphosphate. The sequence is that of Glycine--tRNA ligase beta subunit from Pseudomonas aeruginosa (strain ATCC 15692 / DSM 22644 / CIP 104116 / JCM 14847 / LMG 12228 / 1C / PRS 101 / PAO1).